We begin with the raw amino-acid sequence, 496 residues long: Nucleolar and spindle-associated protein 1-B (496 aa).

3 disordered regions span residues 44 to 206 (YPES…HEAH), 250 to 294 (TPVS…STAN), and 338 to 496 (KSSS…VPVK). A compositionally biased stretch (polar residues) spans 56-69 (GCTSLTDTDELNSS). Over residues 121–134 (TQDKDCLESKKKEV) the composition is skewed to basic and acidic residues. A compositionally biased stretch (polar residues) spans 150–159 (QDTSKQNNSE). A compositionally biased stretch (low complexity) spans 261 to 281 (SRLSLLSPLPRTTGASPSRTP). Composition is skewed to polar residues over residues 376–396 (NTTI…NKAN) and 403–423 (AQNT…QASL). The segment covering 447–459 (SGSNSNVSVLKNN) has biased composition (low complexity). A compositionally biased stretch (basic and acidic residues) spans 467-485 (TREERRKQHELDRKGKRDQ).

Belongs to the NUSAP family. Interacts with DNA, microtubules, ipo7, kpna2 and kpnb1. Microtubule stabilization is inhibited by ipo7 and kpna2, while microtubule bundling is inhibited by kpnb1. Active GTP-bound ran causes dissociation of ipo7 and kpnb1.

Its subcellular location is the cytoplasm. The protein localises to the nucleus. It localises to the cytoskeleton. It is found in the spindle. Functionally, microtubule-associated protein with the capacity to bundle and stabilize microtubules. May associate with chromosomes and promote the organization of meiotic or mitotic spindle microtubules around them. This chain is Nucleolar and spindle-associated protein 1-B (nusap1-b), found in Xenopus laevis (African clawed frog).